The following is a 403-amino-acid chain: NADH-quinone oxidoreductase subunit D (403 aa).

The protein belongs to the complex I 49 kDa subunit family. NDH-1 is composed of 14 different subunits. Subunits NuoB, C, D, E, F, and G constitute the peripheral sector of the complex.

It is found in the cell inner membrane. The catalysed reaction is a quinone + NADH + 5 H(+)(in) = a quinol + NAD(+) + 4 H(+)(out). NDH-1 shuttles electrons from NADH, via FMN and iron-sulfur (Fe-S) centers, to quinones in the respiratory chain. The immediate electron acceptor for the enzyme in this species is believed to be ubiquinone. Couples the redox reaction to proton translocation (for every two electrons transferred, four hydrogen ions are translocated across the cytoplasmic membrane), and thus conserves the redox energy in a proton gradient. The polypeptide is NADH-quinone oxidoreductase subunit D (Erythrobacter litoralis (strain HTCC2594)).